A 180-amino-acid chain; its full sequence is Translation initiation factor IF-3 (180 aa).

It belongs to the IF-3 family. As to quaternary structure, monomer.

The protein localises to the cytoplasm. Functionally, IF-3 binds to the 30S ribosomal subunit and shifts the equilibrium between 70S ribosomes and their 50S and 30S subunits in favor of the free subunits, thus enhancing the availability of 30S subunits on which protein synthesis initiation begins. This chain is Translation initiation factor IF-3, found in Pectobacterium atrosepticum (strain SCRI 1043 / ATCC BAA-672) (Erwinia carotovora subsp. atroseptica).